The sequence spans 326 residues: Tetraacyldisaccharide 4'-kinase (326 aa).

55-62 serves as a coordination point for ATP; the sequence is TAGGNGKT.

Belongs to the LpxK family.

It catalyses the reaction a lipid A disaccharide + ATP = a lipid IVA + ADP + H(+). The protein operates within glycolipid biosynthesis; lipid IV(A) biosynthesis; lipid IV(A) from (3R)-3-hydroxytetradecanoyl-[acyl-carrier-protein] and UDP-N-acetyl-alpha-D-glucosamine: step 6/6. Transfers the gamma-phosphate of ATP to the 4'-position of a tetraacyldisaccharide 1-phosphate intermediate (termed DS-1-P) to form tetraacyldisaccharide 1,4'-bis-phosphate (lipid IVA). This Serratia proteamaculans (strain 568) protein is Tetraacyldisaccharide 4'-kinase.